The following is a 315-amino-acid chain: MSKKLRIIFAGTPDFAARHLDALLSSGHQIVGVFTQPDRPAGRGKKLMPGPVKVLAEKHNLPVFQPVSLRPQENQQLVSDLNADVMVVVAYGLILPKAVLDMPRLGCINVHGSLLPRWRGAAPIQRSLWAGDSETGVTIMRMDVGLDTGDMLYKLACPITAEDTSATLYDKLADLGPQGLIETLQQLADGKAQPEVQDEAFVTYAEKLSKEEAQLDWSLSAAQLERCIRAFNPWPMSWMTIDEQPVKIWKASVINREAKAEPGTIIEATREGIQVATADGILNLESLQPAGKKAMSAQDLLNSRREWFTPGTRLA.

113–116 (SLLP) is a binding site for (6S)-5,6,7,8-tetrahydrofolate.

Belongs to the Fmt family.

It catalyses the reaction L-methionyl-tRNA(fMet) + (6R)-10-formyltetrahydrofolate = N-formyl-L-methionyl-tRNA(fMet) + (6S)-5,6,7,8-tetrahydrofolate + H(+). In terms of biological role, attaches a formyl group to the free amino group of methionyl-tRNA(fMet). The formyl group appears to play a dual role in the initiator identity of N-formylmethionyl-tRNA by promoting its recognition by IF2 and preventing the misappropriation of this tRNA by the elongation apparatus. The protein is Methionyl-tRNA formyltransferase of Enterobacter sp. (strain 638).